The sequence spans 344 residues: Glycerol-3-phosphate dehydrogenase [NAD(P)+] 2 (344 aa).

Positions 12, 13, 33, 34, and 107 each coordinate NADPH. 3 residues coordinate sn-glycerol 3-phosphate: K107, G138, and S140. Residue A142 coordinates NADPH. Sn-glycerol 3-phosphate contacts are provided by K193, D246, S256, R257, and N258. K193 acts as the Proton acceptor in catalysis. R257 lines the NADPH pocket. Residues V281 and E283 each coordinate NADPH.

The protein belongs to the NAD-dependent glycerol-3-phosphate dehydrogenase family.

Its subcellular location is the cytoplasm. It catalyses the reaction sn-glycerol 3-phosphate + NAD(+) = dihydroxyacetone phosphate + NADH + H(+). The enzyme catalyses sn-glycerol 3-phosphate + NADP(+) = dihydroxyacetone phosphate + NADPH + H(+). It functions in the pathway membrane lipid metabolism; glycerophospholipid metabolism. In terms of biological role, catalyzes the reduction of the glycolytic intermediate dihydroxyacetone phosphate (DHAP) to sn-glycerol 3-phosphate (G3P), the key precursor for phospholipid synthesis. In Salinibacter ruber (strain DSM 13855 / M31), this protein is Glycerol-3-phosphate dehydrogenase [NAD(P)+] 2.